Reading from the N-terminus, the 82-residue chain is Penaeidin-3f (82 aa).

Residues 1 to 19 form the signal peptide; sequence MRLVACLVFLASFALVCQG. Gln20 bears the Pyrrolidone carboxylic acid mark. 3 disulfide bridges follow: Cys51-Cys66, Cys55-Cys73, and Cys67-Cys74. Ser81 is subject to Serine amide.

This sequence belongs to the penaeidin family.

The protein resides in the cytoplasmic granule. Antibacterial and antifungal activity. Presents chitin-binding activity. The chain is Penaeidin-3f from Penaeus vannamei (Whiteleg shrimp).